We begin with the raw amino-acid sequence, 235 residues long: MIIFPAIDLKDGQAVRLTKGLMDSAKVYSNEPYELAKRFEEMGAEWLHIVDLNGAFAGEPKNIEQIEKIRKNTNLKIQLGGGIRDEDTIKRYLDLGINRLILGSIAAKNPKLVSELAEKYPIAVGIDAKDGFVAIDGWDKTEGILAKDLAEKYKDSKIECIIATDISKDGTLTGLNIDFILEIQNASQKPVIASGGVASEEDIKKVKENNIYGVIIGKAFYEGKIDLQNVLRENA.

Aspartate 8 serves as the catalytic Proton acceptor. Aspartate 127 functions as the Proton donor in the catalytic mechanism.

It belongs to the HisA/HisF family.

The protein resides in the cytoplasm. It carries out the reaction 1-(5-phospho-beta-D-ribosyl)-5-[(5-phospho-beta-D-ribosylamino)methylideneamino]imidazole-4-carboxamide = 5-[(5-phospho-1-deoxy-D-ribulos-1-ylimino)methylamino]-1-(5-phospho-beta-D-ribosyl)imidazole-4-carboxamide. The protein operates within amino-acid biosynthesis; L-histidine biosynthesis; L-histidine from 5-phospho-alpha-D-ribose 1-diphosphate: step 4/9. This chain is 1-(5-phosphoribosyl)-5-[(5-phosphoribosylamino)methylideneamino] imidazole-4-carboxamide isomerase, found in Nautilia profundicola (strain ATCC BAA-1463 / DSM 18972 / AmH).